A 402-amino-acid polypeptide reads, in one-letter code: Formate-dependent phosphoribosylglycinamide formyltransferase (402 aa).

Residues 22–23 (EL) and E82 contribute to the N(1)-(5-phospho-beta-D-ribosyl)glycinamide site. ATP contacts are provided by residues R115, K160, 165-170 (SSGKGQ), 200-203 (EGFV), and E208. The region spanning 120–318 (RLAAETLGLP…EFELHARAIL (199 aa)) is the ATP-grasp domain. Residues E277 and E289 each contribute to the Mg(2+) site. N(1)-(5-phospho-beta-D-ribosyl)glycinamide contacts are provided by residues D296, K365, and 372–373 (RR).

It belongs to the PurK/PurT family. Homodimer.

It carries out the reaction N(1)-(5-phospho-beta-D-ribosyl)glycinamide + formate + ATP = N(2)-formyl-N(1)-(5-phospho-beta-D-ribosyl)glycinamide + ADP + phosphate + H(+). It functions in the pathway purine metabolism; IMP biosynthesis via de novo pathway; N(2)-formyl-N(1)-(5-phospho-D-ribosyl)glycinamide from N(1)-(5-phospho-D-ribosyl)glycinamide (formate route): step 1/1. In terms of biological role, involved in the de novo purine biosynthesis. Catalyzes the transfer of formate to 5-phospho-ribosyl-glycinamide (GAR), producing 5-phospho-ribosyl-N-formylglycinamide (FGAR). Formate is provided by PurU via hydrolysis of 10-formyl-tetrahydrofolate. The chain is Formate-dependent phosphoribosylglycinamide formyltransferase from Mycobacteroides abscessus (strain ATCC 19977 / DSM 44196 / CCUG 20993 / CIP 104536 / JCM 13569 / NCTC 13031 / TMC 1543 / L948) (Mycobacterium abscessus).